We begin with the raw amino-acid sequence, 397 residues long: Penicillopepsin-1 (397 aa).

The first 20 residues, 1–20, serve as a signal peptide directing secretion; the sequence is MVVFSQVTVALTCFSAIASA. A propeptide spans 21–71 (activation peptide); the sequence is AAVRQEPPQGFTVNQVQKAVPGTRTVNLPGLYANALVKYGATVPATVHAAA. Residues 87-394 enclose the Peptidase A1 domain; that stretch reads YLTPVTIGSS…DSEGPRLGFA (308 aa). Catalysis depends on residues aspartate 103 and aspartate 285. Asparagine 311 carries an N-linked (GlcNAc...) asparagine glycan. Residues cysteine 322 and cysteine 357 are joined by a disulfide bond.

It belongs to the peptidase A1 family. Monomer.

Its subcellular location is the secreted. The enzyme catalyses Hydrolysis of proteins with broad specificity similar to that of pepsin A, preferring hydrophobic residues at P1 and P1', but also cleaving 20-Gly-|-Glu-21 in the B chain of insulin. Clots milk, and activates trypsinogen.. Its function is as follows. Secreted aspartic endopeptidase that allows assimilation of proteinaceous substrates. The scissile peptide bond is attacked by a nucleophilic water molecule activated by two aspartic residues in the active site. Shows a broad primary substrate specificity. Favors hydrophobic residues at the P1 and P1' positions, but can also activate trypsinogen and hydrolyze the B chain of insulin between positions 'Gly-20' and 'Glu-21'. The sequence is that of Penicillopepsin-1 from Penicillium roqueforti.